Reading from the N-terminus, the 214-residue chain is Large ribosomal subunit protein uL3 (214 aa).

The segment at 129–157 is disordered; sequence FGRGPMSHGSKNHRRPGSIGAGTTPGRVF.

Belongs to the universal ribosomal protein uL3 family. As to quaternary structure, part of the 50S ribosomal subunit. Forms a cluster with proteins L14 and L19.

One of the primary rRNA binding proteins, it binds directly near the 3'-end of the 23S rRNA, where it nucleates assembly of the 50S subunit. This chain is Large ribosomal subunit protein uL3, found in Synechococcus sp. (strain JA-2-3B'a(2-13)) (Cyanobacteria bacterium Yellowstone B-Prime).